The following is a 376-amino-acid chain: MTAQQNTSLASFTGDAQPYGGGDPYADYRTADLPFTQYANLADRQLGAGVVAANDEFFAQRENLLVPEPAEFDPEHFGHKGKVMDGWETRRRRGVSAEQPWPTEEDHDWALIRLGAPGVIRGIVVDTAHFRGNYPQAVSVEGASVAGSPSPEELLADDVKWTTLVPRTPVGGHAANGFAVSAEQRFTHLRLKQHPDGGIARLRVYGEVVADPAWLAALGTFDVVALENGGQVEDASNLFYSPATNTIQPGRSRKMDDGWETRRRRDKGNDWIQYRLVDRSQIRAIEIDTAYLKGNSAGWASVSVKDGEAGEWREVLPRTRMQPDTNHRFVLPEAAVGTHARVDIFPDGGISRLRLFGSLTEDGAARLAARHQELGG.

The protein belongs to the allantoicase family.

It carries out the reaction allantoate + H2O = (S)-ureidoglycolate + urea. It functions in the pathway nitrogen metabolism; (S)-allantoin degradation; (S)-ureidoglycolate from allantoate (aminidohydrolase route): step 1/1. The polypeptide is Probable allantoicase (Streptomyces coelicolor (strain ATCC BAA-471 / A3(2) / M145)).